The primary structure comprises 479 residues: Citrate synthase, mitochondrial (479 aa).

Residues 1–37 (MSAILSTTSKSFLSRGSTRQCQNMQKALFALLNARHY) constitute a mitochondrion transit peptide. Residues histidine 312, histidine 358, and aspartate 413 contribute to the active site. Serine 462 carries the post-translational modification Phosphoserine.

It belongs to the citrate synthase family. Monomer and homodimer. Exists as an inactive monomer when phosphorylated. Homodimerization is dependent on dephosphorylation of Ser-462 by PTC7 and is required for activity. Post-translationally, phosphorylation at Ser-462. Dephosphorylated at Ser-462 by PTC7.

It localises to the mitochondrion matrix. It carries out the reaction oxaloacetate + acetyl-CoA + H2O = citrate + CoA + H(+). The protein operates within carbohydrate metabolism; tricarboxylic acid cycle; isocitrate from oxaloacetate: step 1/2. With respect to regulation, phosphorylation at Ser-462 inhibits catalytic activity. Dephosphorylation at Ser-462 by PTC7 enhances catalytic activity. In terms of biological role, specific citrate synthase with catalytic activity only with acetyl-CoA. The sequence is that of Citrate synthase, mitochondrial from Saccharomyces cerevisiae (strain ATCC 204508 / S288c) (Baker's yeast).